Consider the following 91-residue polypeptide: Cell division protein CrgA (91 aa).

The span at 1–24 shows a compositional bias: polar residues; the sequence is MPKSKITTEGSALPQSSSSATNRT. The segment at 1-28 is disordered; the sequence is MPKSKITTEGSALPQSSSSATNRTPVKI. Helical transmembrane passes span 38–58 and 68–88; these read IAIM…NYLA and LGPW…LMTM.

This sequence belongs to the CrgA family.

It is found in the cell membrane. Involved in cell division. The sequence is that of Cell division protein CrgA from Corynebacterium aurimucosum (strain ATCC 700975 / DSM 44827 / CIP 107346 / CN-1) (Corynebacterium nigricans).